Reading from the N-terminus, the 228-residue chain is Cytochrome c oxidase subunit 2 (228 aa).

Residues methionine 1–histidine 26 lie on the Mitochondrial intermembrane side of the membrane. The chain crosses the membrane as a helical span at residues alanine 27–asparagine 48. Residues asparagine 49 to glutamate 62 are Mitochondrial matrix-facing. Residues methionine 63–arginine 82 form a helical membrane-spanning segment. The Mitochondrial intermembrane segment spans residues leucine 83–serine 228. The Cu cation site is built by histidine 161, cysteine 196, glutamate 198, cysteine 200, histidine 204, and methionine 207. Glutamate 198 serves as a coordination point for Mg(2+).

The protein belongs to the cytochrome c oxidase subunit 2 family. Component of the cytochrome c oxidase (complex IV, CIV), a multisubunit enzyme composed of a catalytic core of 3 subunits and several supernumerary subunits. The complex exists as a monomer or a dimer and forms supercomplexes (SCs) in the inner mitochondrial membrane with ubiquinol-cytochrome c oxidoreductase (cytochrome b-c1 complex, complex III, CIII). It depends on Cu cation as a cofactor.

It is found in the mitochondrion inner membrane. It catalyses the reaction 4 Fe(II)-[cytochrome c] + O2 + 8 H(+)(in) = 4 Fe(III)-[cytochrome c] + 2 H2O + 4 H(+)(out). In terms of biological role, component of the cytochrome c oxidase, the last enzyme in the mitochondrial electron transport chain which drives oxidative phosphorylation. The respiratory chain contains 3 multisubunit complexes succinate dehydrogenase (complex II, CII), ubiquinol-cytochrome c oxidoreductase (cytochrome b-c1 complex, complex III, CIII) and cytochrome c oxidase (complex IV, CIV), that cooperate to transfer electrons derived from NADH and succinate to molecular oxygen, creating an electrochemical gradient over the inner membrane that drives transmembrane transport and the ATP synthase. Cytochrome c oxidase is the component of the respiratory chain that catalyzes the reduction of oxygen to water. Electrons originating from reduced cytochrome c in the intermembrane space (IMS) are transferred via the dinuclear copper A center (CU(A)) of subunit 2 and heme A of subunit 1 to the active site in subunit 1, a binuclear center (BNC) formed by heme A3 and copper B (CU(B)). The BNC reduces molecular oxygen to 2 water molecules using 4 electrons from cytochrome c in the IMS and 4 protons from the mitochondrial matrix. The chain is Cytochrome c oxidase subunit 2 (mt:CoII) from Drosophila melanogaster (Fruit fly).